The primary structure comprises 146 residues: MLKKNKDELNDLEYLVTQENGTEPPFQNEYWNHFEKGIYVDKLSGKPLFTSEEKFESDCGWPSFSKALSDDEVVELVDKSFGMVRTEVRSEDSNSHLGHVFNDGPAETGGLRYCINSAAVQFIPYDKLEELGYGDLIPHFKDQGEK.

One can recognise a MsrB domain in the interval 2–125 (LKKNKDELND…NSAAVQFIPY (124 aa)). The active-site Nucleophile is the Cys-114.

The protein belongs to the MsrB Met sulfoxide reductase family.

It carries out the reaction L-methionyl-[protein] + [thioredoxin]-disulfide + H2O = L-methionyl-(R)-S-oxide-[protein] + [thioredoxin]-dithiol. The sequence is that of Peptide methionine sulfoxide reductase MsrB from Staphylococcus carnosus (strain TM300).